The following is a 185-amino-acid chain: Pyridoxal 5'-phosphate synthase subunit PdxT (185 aa).

46–48 (GES) lines the L-glutamine pocket. Cys-78 functions as the Nucleophile in the catalytic mechanism. Residues Arg-106 and 132–133 (IR) contribute to the L-glutamine site. Residues His-168 and Glu-170 each act as charge relay system in the active site.

It belongs to the glutaminase PdxT/SNO family. As to quaternary structure, in the presence of PdxS, forms a dodecamer of heterodimers. Only shows activity in the heterodimer.

It carries out the reaction aldehydo-D-ribose 5-phosphate + D-glyceraldehyde 3-phosphate + L-glutamine = pyridoxal 5'-phosphate + L-glutamate + phosphate + 3 H2O + H(+). The enzyme catalyses L-glutamine + H2O = L-glutamate + NH4(+). It functions in the pathway cofactor biosynthesis; pyridoxal 5'-phosphate biosynthesis. In terms of biological role, catalyzes the hydrolysis of glutamine to glutamate and ammonia as part of the biosynthesis of pyridoxal 5'-phosphate. The resulting ammonia molecule is channeled to the active site of PdxS. The chain is Pyridoxal 5'-phosphate synthase subunit PdxT from Corynebacterium diphtheriae (strain ATCC 700971 / NCTC 13129 / Biotype gravis).